The sequence spans 383 residues: Fatty acid hydroxylase ahd1 (383 aa).

The next 4 membrane-spanning stretches (helical) occupy residues 84–104 (VMGL…NKSW), 123–143 (TVHT…LFAL), 172–192 (LIPV…IIYY), and 214–236 (VAQW…RALH). The 125-residue stretch at 217–341 (WLVCLLMEDI…VGLLDAIFKT (125 aa)) folds into the Fatty acid hydroxylase domain. N-linked (GlcNAc...) asparagine glycosylation is present at N342.

It belongs to the sterol desaturase family.

The protein resides in the membrane. It functions in the pathway secondary metabolite biosynthesis. Fatty acid hydroxylase; part of the gene cluster that mediates the biosynthesis of the glycolipid biosurfactant ustilagic acid (UA). UA is a secreted cellobiose glycolipid that is toxic for many microorganisms and confers biocontrol activity to U.maydis. UA consists of 15,16-dihydroxypalmitic or 2,15,16-trihydroxypalmitic acid, which is O-glycosidically linked to cellobiose at its terminal hydroxyl group. In addition, the cellobiose moiety is acetylated and acylated with a short-chain hydroxy fatty acid. UA biosynthesis starts with omega-hydroxylation of palmitic acid catalyzed by the cytochrome P450 monooxygenase cyp1. Terminal hydroxylation of palmitic acid precedes subterminal hydroxylation catalyzed by the cytochrome P450 monooxygenase cyp2. Sequential glucosylation of the hydroxy fatty acid is probably catalyzed by the glycosyltransferase ugt1. The cellobiose lipid is further decorated by acetylation of the proximal glucose residue and by acylation with a short-chain beta-hydroxy fatty acid at the distal glucose residue. The acyltransferase uat1 may be a good candidate for catalyzing either acetylation or acylation of the cellobiose lipid. The fatty acid synthase fas2 may be involved in synthesis of the carbon backbone of the short-chain beta-hydroxy fatty acid esterified to the cellobiose disaccharide. The secreted UA consists of a mixture of both alpha-hydroxylated and non-hydroxylated glycolipids; therefore, alpha-hydroxylation of the long-chain fatty, catalyzed by the fatty acid hydroxylase ahd1, occurs late in UA biosynthesis and may be the last step before secretion. This is Fatty acid hydroxylase ahd1 from Mycosarcoma maydis (Corn smut fungus).